The primary structure comprises 376 residues: Erythronate-4-phosphate dehydrogenase (376 aa).

Substrate-binding residues include Ser45 and Thr67. Asp147 is an NAD(+) binding site. Residue Arg209 is part of the active site. NAD(+) is bound at residue Asp233. Glu238 is a catalytic residue. His255 acts as the Proton donor in catalysis. Position 258 (Gly258) interacts with NAD(+). Tyr259 provides a ligand contact to substrate.

Belongs to the D-isomer specific 2-hydroxyacid dehydrogenase family. PdxB subfamily. Homodimer.

Its subcellular location is the cytoplasm. It carries out the reaction 4-phospho-D-erythronate + NAD(+) = (R)-3-hydroxy-2-oxo-4-phosphooxybutanoate + NADH + H(+). It participates in cofactor biosynthesis; pyridoxine 5'-phosphate biosynthesis; pyridoxine 5'-phosphate from D-erythrose 4-phosphate: step 2/5. Catalyzes the oxidation of erythronate-4-phosphate to 3-hydroxy-2-oxo-4-phosphonooxybutanoate. The chain is Erythronate-4-phosphate dehydrogenase from Shewanella baltica (strain OS223).